Here is a 96-residue protein sequence, read N- to C-terminus: Large ribosomal subunit protein eL14 (96 aa).

This sequence belongs to the eukaryotic ribosomal protein eL14 family.

The chain is Large ribosomal subunit protein eL14 from Desulfurococcus amylolyticus (strain DSM 18924 / JCM 16383 / VKM B-2413 / 1221n) (Desulfurococcus kamchatkensis).